We begin with the raw amino-acid sequence, 148 residues long: uncharacterized protein (148 aa).

This sequence belongs to the serpin family. Poxviruses subfamily.

This is an uncharacterized protein from Fowlpox virus (strain NVSL) (FPV).